Reading from the N-terminus, the 131-residue chain is MHRTFLFSKIHHCTLTETNLEYVGSISIDQTLLDAAGIVPYEQVQVVNMNNGERLVTYAIPAPADSGAVELNGAAARLGTRGDRVIIMTYAQLTSEEIEGFEPRVVLVDQENRVIEDAPVVNASTPELCLT.

Residue Ser-25 is the Schiff-base intermediate with substrate; via pyruvic acid of the active site. At Ser-25 the chain carries Pyruvic acid (Ser). Substrate is bound at residue Thr-57. Tyr-58 serves as the catalytic Proton donor. 73-75 (GAA) lines the substrate pocket.

The protein belongs to the PanD family. In terms of assembly, heterooctamer of four alpha and four beta subunits. It depends on pyruvate as a cofactor. In terms of processing, is synthesized initially as an inactive proenzyme, which is activated by self-cleavage at a specific serine bond to produce a beta-subunit with a hydroxyl group at its C-terminus and an alpha-subunit with a pyruvoyl group at its N-terminus.

The protein resides in the cytoplasm. It catalyses the reaction L-aspartate + H(+) = beta-alanine + CO2. Its pathway is cofactor biosynthesis; (R)-pantothenate biosynthesis; beta-alanine from L-aspartate: step 1/1. Functionally, catalyzes the pyruvoyl-dependent decarboxylation of aspartate to produce beta-alanine. The sequence is that of Aspartate 1-decarboxylase from Acaryochloris marina (strain MBIC 11017).